A 625-amino-acid chain; its full sequence is UvrABC system protein C (625 aa).

Positions 13–92 (DKPGVYIMKD…IKKHRPKFNI (80 aa)) constitute a GIY-YIG domain. Residues 204–239 (EDIIKKLEKDMKEAADNLEFERAARIRDKINSLKHI) form the UVR domain.

This sequence belongs to the UvrC family. Interacts with UvrB in an incision complex.

It is found in the cytoplasm. Functionally, the UvrABC repair system catalyzes the recognition and processing of DNA lesions. UvrC both incises the 5' and 3' sides of the lesion. The N-terminal half is responsible for the 3' incision and the C-terminal half is responsible for the 5' incision. The sequence is that of UvrABC system protein C from Acetivibrio thermocellus (strain ATCC 27405 / DSM 1237 / JCM 9322 / NBRC 103400 / NCIMB 10682 / NRRL B-4536 / VPI 7372) (Clostridium thermocellum).